The primary structure comprises 342 residues: (+)-pulegone reductase (342 aa).

Residues 163–166, Lys-189, Tyr-205, Asn-229, 251–257, 281–283, and Asn-331 each bind NADP(+); these read GSVG, CGMVSQY, and FVV.

It belongs to the NADP-dependent oxidoreductase L4BD family.

The protein localises to the cytoplasm. It carries out the reaction (2R,5R)-isomenthone + NADP(+) = (R)-pulegone + NADPH + H(+). It catalyses the reaction (1R,4S)-menthone + NADP(+) = (R)-pulegone + NADPH + H(+). Its pathway is secondary metabolite biosynthesis; terpenoid biosynthesis. With respect to regulation, not inhibited by (+)-menthofuran. In terms of biological role, monoterpene synthase that catalyzes the specific reduction of the 4,8-double bond of (+)-pulegone to produce both (-)-menthone and (+)-isomenthone in a 70:30 ratio. Unable to utilize either (-)-isopiperitenone or (+)-cis-isopulegone, or to catalyze the reverse reaction with (-)-menthone or (+)-isomenthone. Has an absolute requirement for NADPH. The protein is (+)-pulegone reductase of Mentha piperita (Peppermint).